The chain runs to 255 residues: Hydroxyacylglutathione hydrolase (255 aa).

Zn(2+) is bound by residues His56, His58, Asp60, His61, His114, Asp133, and His171.

Belongs to the metallo-beta-lactamase superfamily. Glyoxalase II family. In terms of assembly, monomer. It depends on Zn(2+) as a cofactor.

It carries out the reaction an S-(2-hydroxyacyl)glutathione + H2O = a 2-hydroxy carboxylate + glutathione + H(+). The protein operates within secondary metabolite metabolism; methylglyoxal degradation; (R)-lactate from methylglyoxal: step 2/2. Its function is as follows. Thiolesterase that catalyzes the hydrolysis of S-D-lactoyl-glutathione to form glutathione and D-lactic acid. The chain is Hydroxyacylglutathione hydrolase from Roseobacter denitrificans (strain ATCC 33942 / OCh 114) (Erythrobacter sp. (strain OCh 114)).